The sequence spans 582 residues: Phosphoribosylaminoimidazole carboxylase (582 aa).

One can recognise an ATP-grasp domain in the interval 114–305 (KKYLAERGVA…QFENHLRAIL (192 aa)). Position 143-200 (143-200 (AGRLGLPLMLKAKTLAYDGRGNSPLKSASSGDIQASLKFLGDRPLYAEGWAPFVKEVA)) interacts with ATP.

The protein in the C-terminal section; belongs to the AIR carboxylase family. Class I subfamily.

It catalyses the reaction 5-amino-1-(5-phospho-D-ribosyl)imidazole-4-carboxylate + H(+) = 5-amino-1-(5-phospho-beta-D-ribosyl)imidazole + CO2. Its pathway is purine metabolism; IMP biosynthesis via de novo pathway; 5-amino-1-(5-phospho-D-ribosyl)imidazole-4-carboxylate from 5-amino-1-(5-phospho-D-ribosyl)imidazole (carboxylase route): step 1/1. This chain is Phosphoribosylaminoimidazole carboxylase (ADE2), found in Cryptococcus neoformans var. neoformans serotype D (strain JEC21 / ATCC MYA-565) (Filobasidiella neoformans).